Consider the following 137-residue polypeptide: Small ribosomal subunit protein bS6 (137 aa).

Residues 113-137 (EEQREKKNFRKPFIKREEAATKENK) form a disordered region. Positions 126–137 (IKREEAATKENK) are enriched in basic and acidic residues.

This sequence belongs to the bacterial ribosomal protein bS6 family.

Functionally, binds together with bS18 to 16S ribosomal RNA. In Mycoplasma capricolum subsp. capricolum (strain California kid / ATCC 27343 / NCTC 10154), this protein is Small ribosomal subunit protein bS6.